Reading from the N-terminus, the 369-residue chain is Beta-1,4-galactosyltransferase 2 (369 aa).

The Cytoplasmic portion of the chain corresponds to 1 to 15; that stretch reads MSRLLGGTLERVCKA. A helical; Signal-anchor for type II membrane protein transmembrane segment spans residues 16–36; it reads VLLLCLLHFLVAVILYFDVYA. At 37–369 the chain is on the lumenal side; the sequence is QHLAFFSRFS…GQPMSWLTQG (333 aa). A compositionally biased stretch (polar residues) spans 58-73; sequence ASSSTNCSRPNATAAS. A disordered region spans residues 58 to 90; sequence ASSSTNCSRPNATAASSGLPEVPSARPGPTAPV. 2 N-linked (GlcNAc...) asparagine glycosylation sites follow: Asn63 and Asn68. Cys94 and Cys136 form a disulfide bridge. Residues 147–151, 186–188, 214–215, and Trp275 each bind UDP-alpha-D-galactose; these read PFRHR, FNR, and VD. Cys208 and Cys227 are disulfide-bonded. Asp215 provides a ligand contact to Mn(2+). 277-280 lines the N-acetyl-D-glucosamine pocket; sequence GEDD. His308 provides a ligand contact to Mn(2+). 308-310 serves as a coordination point for UDP-alpha-D-galactose; it reads HDR. An N-acetyl-D-glucosamine-binding site is contributed by Arg320. Asn354 is a glycosylation site (N-linked (GlcNAc...) asparagine).

Belongs to the glycosyltransferase 7 family. Mn(2+) serves as cofactor.

It localises to the golgi apparatus. It is found in the golgi stack membrane. The catalysed reaction is D-glucose + UDP-alpha-D-galactose = lactose + UDP + H(+). It catalyses the reaction an N-acetyl-beta-D-glucosaminyl derivative + UDP-alpha-D-galactose = a beta-D-galactosyl-(1-&gt;4)-N-acetyl-beta-D-glucosaminyl derivative + UDP + H(+). The enzyme catalyses N-acetyl-D-glucosamine + UDP-alpha-D-galactose = beta-D-galactosyl-(1-&gt;4)-N-acetyl-D-glucosamine + UDP + H(+). The protein operates within protein modification; protein glycosylation. Functionally, responsible for the synthesis of complex-type N-linked oligosaccharides in many glycoproteins as well as the carbohydrate moieties of glycolipids. Can produce lactose. This is Beta-1,4-galactosyltransferase 2 from Mus musculus (Mouse).